Consider the following 450-residue polypeptide: Molybdate-anion transporter (450 aa).

12 consecutive transmembrane segments (helical) span residues 1 to 21 (MLVT…GLEL), 43 to 63 (LDFY…APYL), 79 to 99 (ILYV…SSLV), 128 to 148 (FVLL…FSAF), 174 to 194 (AAFW…AVAS), 195 to 215 (WIGL…ALAG), 249 to 269 (VLLL…FVFL), 278 to 298 (GAPL…GSSL), 311 to 331 (PMHL…MLTF), 344 to 364 (FIAF…MSFL), 376 to 396 (GVLN…LLVL), and 409 to 429 (FSIC…LFTV).

This sequence belongs to the major facilitator superfamily. In terms of tissue distribution, expressed ubiquitously but at relatively higher levels in the olfactory bulb and the skeletal muscle.

It is found in the cell membrane. Mediates high-affinity intracellular uptake of the rare oligo-element molybdenum. The sequence is that of Molybdate-anion transporter (MFSD5) from Homo sapiens (Human).